Here is a 201-residue protein sequence, read N- to C-terminus: Dephospho-CoA kinase (201 aa).

The 199-residue stretch at 3–201 (VIGLTGGIAS…WKERIEKNPR (199 aa)) folds into the DPCK domain. 11–16 (ASGKST) provides a ligand contact to ATP.

Belongs to the CoaE family.

The protein localises to the cytoplasm. The catalysed reaction is 3'-dephospho-CoA + ATP = ADP + CoA + H(+). It functions in the pathway cofactor biosynthesis; coenzyme A biosynthesis; CoA from (R)-pantothenate: step 5/5. Its function is as follows. Catalyzes the phosphorylation of the 3'-hydroxyl group of dephosphocoenzyme A to form coenzyme A. This Geobacter metallireducens (strain ATCC 53774 / DSM 7210 / GS-15) protein is Dephospho-CoA kinase.